We begin with the raw amino-acid sequence, 428 residues long: AP-1 complex subunit mu (428 aa).

A2 carries the N-acetylalanine; partial modification. The 258-residue stretch at 169 to 426 folds into the MHD domain; it reads KNEVFLDVVE…VCLSGDYQFR (258 aa).

The protein belongs to the adaptor complexes medium subunit family. Adaptor protein complex 1 (AP-1) is a heterotetramer composed of two large adaptins (gamma-type subunit and beta-type subunit), a medium adaptin (mu-type subunit) and a small adaptin (sigma-type subunit).

The protein localises to the golgi apparatus. It is found in the trans-Golgi network. The protein resides in the cytoplasmic vesicle. It localises to the clathrin-coated vesicle membrane. Functionally, subunit of clathrin-associated adaptor protein complex 1 that plays a role in protein sorting in the trans-Golgi network (TGN) and endosomes. The AP complexes mediate the recruitment of clathrin to membranes and the recognition of sorting signals within the cytosolic tails of transmembrane cargo molecules. Also involved in early steps of phagocytosis and macropinocytosis. This Dictyostelium discoideum (Social amoeba) protein is AP-1 complex subunit mu (apm1).